A 102-amino-acid chain; its full sequence is MAAQKIRIRLKAYDHEVIDSSARKIVETVTRTGAQVAGPVPLPTEKNVYCVIRSPHKYKDSREHFEMRTHKRLIDILDPTPKTVDSLMRLDLPAGVDIEIKL.

This sequence belongs to the universal ribosomal protein uS10 family. As to quaternary structure, part of the 30S ribosomal subunit.

In terms of biological role, involved in the binding of tRNA to the ribosomes. This is Small ribosomal subunit protein uS10 from Parafrankia sp. (strain EAN1pec).